The chain runs to 248 residues: uncharacterized protein (248 aa).

A helical transmembrane segment spans residues 30–50; it reads LIALAIFIGLIAIFMFGCKAA. 2 disordered regions span residues 59–91 and 208–248; these read NRDTTQSDTDVIYPRDDPRASRSHQNFGFMDPP and TTES…VSTR. Composition is skewed to polar residues over residues 210–220 and 239–248; these read ESPAPAQSTSN and SLHNETVSTR.

It localises to the membrane. This is an uncharacterized protein from Caenorhabditis elegans.